We begin with the raw amino-acid sequence, 438 residues long: Exoglucanase 3 (438 aa).

Residues 1 to 20 (MFKFAALLALASLVPGFVQA) form the signal peptide. One can recognise a CBM1 domain in the interval 21-59 (QSPVWGQCGGNGWTGPTTCASGSTCVKQNDFYSQCLPNN). Intrachain disulfides connect Cys-28–Cys-45 and Cys-39–Cys-55. The interval 57-90 (PNNQAPPSTTTQPGTTPPATTTSGGTGPTSGAGN) is disordered. The tract at residues 60 to 87 (QAPPSTTTQPGTTPPATTTSGGTGPTSG) is linker. The segment covering 61-79 (APPSTTTQPGTTPPATTTS) has biased composition (low complexity). The interval 88–438 (AGNPYTGKTV…TLVANANPAL (351 aa)) is catalytic. Cystine bridges form between Cys-170–Cys-229 and Cys-360–Cys-407. The active-site Proton donor is the Asp-215. The active-site Nucleophile is the Asp-393.

Belongs to the glycosyl hydrolase 6 (cellulase B) family.

The enzyme catalyses Hydrolysis of (1-&gt;4)-beta-D-glucosidic linkages in cellulose and cellotetraose, releasing cellobiose from the non-reducing ends of the chains.. Its function is as follows. Shows enzymatic activity towards crystalline cellulose. At long reaction times. It is also able to degrade carboxymethyl cellulose and barley B-glucan. In Agaricus bisporus (White button mushroom), this protein is Exoglucanase 3 (cel3).